A 264-amino-acid chain; its full sequence is Tryptophan synthase alpha chain (264 aa).

Active-site proton acceptor residues include glutamate 44 and aspartate 55.

It belongs to the TrpA family. As to quaternary structure, tetramer of two alpha and two beta chains.

The enzyme catalyses (1S,2R)-1-C-(indol-3-yl)glycerol 3-phosphate + L-serine = D-glyceraldehyde 3-phosphate + L-tryptophan + H2O. It participates in amino-acid biosynthesis; L-tryptophan biosynthesis; L-tryptophan from chorismate: step 5/5. In terms of biological role, the alpha subunit is responsible for the aldol cleavage of indoleglycerol phosphate to indole and glyceraldehyde 3-phosphate. This is Tryptophan synthase alpha chain from Lactiplantibacillus plantarum (strain ATCC BAA-793 / NCIMB 8826 / WCFS1) (Lactobacillus plantarum).